A 1555-amino-acid polypeptide reads, in one-letter code: Protein TASOR (1555 aa).

Disordered regions lie at residues 1–74 (MEEN…DKRA), 645–711 (QKKK…RQET), 744–773 (QNST…GQDQ), 870–911 (ALPN…TTPS), and 1390–1462 (NQGD…PTLD). Positions 35 to 47 (VQQTLKRTNSTES) are enriched in polar residues. The segment covering 61-71 (RRFQIPRKSRD) has biased composition (basic residues). Over residues 667–688 (DRQSEKAWKHRKCEENVHHDNE) the composition is skewed to basic and acidic residues. Composition is skewed to polar residues over residues 692 to 702 (SAQSLISSLGG) and 744 to 761 (QNST…LSQA). Residues 888 to 904 (PLHETERQRPRHDRDYC) show a composition bias toward basic and acidic residues. The span at 1402–1417 (SKEEEDMSLDSEDDTP) shows a compositional bias: acidic residues. The segment covering 1448–1458 (ESPSTLNQGKT) has biased composition (polar residues).

This sequence belongs to the TASOR family. Component of the HUSH complex.

The protein resides in the nucleus. The protein localises to the chromosome. Functionally, component of the HUSH complex, a multiprotein complex that mediates epigenetic repression. The HUSH complex is recruited to genomic loci rich in H3K9me3 and is probably required to maintain transcriptional silencing by promoting further deposition of H3K9me3. The protein is Protein TASOR of Xenopus laevis (African clawed frog).